Here is a 389-residue protein sequence, read N- to C-terminus: S-adenosylmethionine synthase (389 aa).

Histidine 17 is an ATP binding site. Residue aspartate 19 coordinates Mg(2+). Residue glutamate 45 participates in K(+) binding. L-methionine-binding residues include glutamate 58 and glutamine 101. The segment at 101-111 (QSPDISQGVTE) is flexible loop. ATP contacts are provided by residues 168-170 (DSK), 234-235 (RF), aspartate 243, 249-250 (RK), alanine 266, and lysine 270. Residue aspartate 243 coordinates L-methionine. Residue lysine 274 participates in L-methionine binding.

The protein belongs to the AdoMet synthase family. As to quaternary structure, homotetramer; dimer of dimers. It depends on Mg(2+) as a cofactor. K(+) is required as a cofactor.

It localises to the cytoplasm. The catalysed reaction is L-methionine + ATP + H2O = S-adenosyl-L-methionine + phosphate + diphosphate. Its pathway is amino-acid biosynthesis; S-adenosyl-L-methionine biosynthesis; S-adenosyl-L-methionine from L-methionine: step 1/1. Catalyzes the formation of S-adenosylmethionine (AdoMet) from methionine and ATP. The overall synthetic reaction is composed of two sequential steps, AdoMet formation and the subsequent tripolyphosphate hydrolysis which occurs prior to release of AdoMet from the enzyme. In Syntrophotalea carbinolica (strain DSM 2380 / NBRC 103641 / GraBd1) (Pelobacter carbinolicus), this protein is S-adenosylmethionine synthase.